Here is a 424-residue protein sequence, read N- to C-terminus: Serine--tRNA ligase (424 aa).

An L-serine-binding site is contributed by 229–231 (TAE). 260 to 262 (RSE) lines the ATP pocket. E283 contributes to the L-serine binding site. Residue 347-350 (EISS) coordinates ATP. Residue S383 participates in L-serine binding.

The protein belongs to the class-II aminoacyl-tRNA synthetase family. Type-1 seryl-tRNA synthetase subfamily. Homodimer. The tRNA molecule binds across the dimer.

It is found in the cytoplasm. The enzyme catalyses tRNA(Ser) + L-serine + ATP = L-seryl-tRNA(Ser) + AMP + diphosphate + H(+). It carries out the reaction tRNA(Sec) + L-serine + ATP = L-seryl-tRNA(Sec) + AMP + diphosphate + H(+). Its pathway is aminoacyl-tRNA biosynthesis; selenocysteinyl-tRNA(Sec) biosynthesis; L-seryl-tRNA(Sec) from L-serine and tRNA(Sec): step 1/1. In terms of biological role, catalyzes the attachment of serine to tRNA(Ser). Is also able to aminoacylate tRNA(Sec) with serine, to form the misacylated tRNA L-seryl-tRNA(Sec), which will be further converted into selenocysteinyl-tRNA(Sec). This Gluconacetobacter diazotrophicus (strain ATCC 49037 / DSM 5601 / CCUG 37298 / CIP 103539 / LMG 7603 / PAl5) protein is Serine--tRNA ligase.